A 257-amino-acid polypeptide reads, in one-letter code: Ribosomal RNA small subunit methyltransferase J (257 aa).

S-adenosyl-L-methionine contacts are provided by residues 107–108, 123–124, and aspartate 177; these read RD and ER.

It belongs to the methyltransferase superfamily. RsmJ family.

It is found in the cytoplasm. It carries out the reaction guanosine(1516) in 16S rRNA + S-adenosyl-L-methionine = N(2)-methylguanosine(1516) in 16S rRNA + S-adenosyl-L-homocysteine + H(+). Functionally, specifically methylates the guanosine in position 1516 of 16S rRNA. This Haemophilus influenzae (strain 86-028NP) protein is Ribosomal RNA small subunit methyltransferase J.